A 365-amino-acid polypeptide reads, in one-letter code: Class I histocompatibility antigen, Gogo-C*0101/C*0102 alpha chain (365 aa).

The signal sequence occupies residues 1–24 (MRVMAPRTLILLLSGALALTETWA). The tract at residues 25–114 (GSHSMRYFFT…LRGYYNQSED (90 aa)) is alpha-1. Over 25–308 (GSHSMRYFFT…EPSSQPTIPI (284 aa)) the chain is Extracellular. Residue Asn110 is glycosylated (N-linked (GlcNAc...) asparagine). Residues 115-206 (GSHTFQRMYG…ENGKETLQRA (92 aa)) are alpha-2. Disulfide bonds link Cys125-Cys188 and Cys227-Cys283. The segment at 207 to 298 (DPPKTHVTHH…GLLEPLTLRW (92 aa)) is alpha-3. The region spanning 209–297 (PKTHVTHHPI…KGLLEPLTLR (89 aa)) is the Ig-like C1-type domain. The connecting peptide stretch occupies residues 299-308 (EPSSQPTIPI). The helical transmembrane segment at 309-332 (VGIVAGLAVLAVVFTGTVVAAVMC) threads the bilayer. Over 333–365 (RRKSSGGKGGSCSQAACSNSAQGSDESLIACKA) the chain is Cytoplasmic. Residues Ser356 and Ser359 each carry the phosphoserine modification.

This sequence belongs to the MHC class I family. Heterodimer of an alpha chain and a beta chain (beta-2-microglobulin).

The protein localises to the membrane. Functionally, involved in the presentation of foreign antigens to the immune system. The sequence is that of Class I histocompatibility antigen, Gogo-C*0101/C*0102 alpha chain from Gorilla gorilla gorilla (Western lowland gorilla).